The following is an 89-amino-acid chain: Small ribosomal subunit protein uS15 (89 aa).

Positions 1–18 (MALSAQEKDAIVKEHQTS) are enriched in basic and acidic residues. Residues 1 to 25 (MALSAQEKDAIVKEHQTSETDTGSP) are disordered.

This sequence belongs to the universal ribosomal protein uS15 family. In terms of assembly, part of the 30S ribosomal subunit. Forms a bridge to the 50S subunit in the 70S ribosome, contacting the 23S rRNA.

One of the primary rRNA binding proteins, it binds directly to 16S rRNA where it helps nucleate assembly of the platform of the 30S subunit by binding and bridging several RNA helices of the 16S rRNA. Its function is as follows. Forms an intersubunit bridge (bridge B4) with the 23S rRNA of the 50S subunit in the ribosome. This Teredinibacter turnerae (strain ATCC 39867 / T7901) protein is Small ribosomal subunit protein uS15.